The sequence spans 1207 residues: DNA-directed RNA polymerase subunit beta' (1207 aa).

Zn(2+) is bound by residues cysteine 60, cysteine 62, cysteine 75, and cysteine 78. The Mg(2+) site is built by aspartate 450, aspartate 452, and aspartate 454. Residues cysteine 819, cysteine 893, cysteine 900, and cysteine 903 each coordinate Zn(2+).

The protein belongs to the RNA polymerase beta' chain family. In terms of assembly, the RNAP catalytic core consists of 2 alpha, 1 beta, 1 beta' and 1 omega subunit. When a sigma factor is associated with the core the holoenzyme is formed, which can initiate transcription. Requires Mg(2+) as cofactor. The cofactor is Zn(2+).

The catalysed reaction is RNA(n) + a ribonucleoside 5'-triphosphate = RNA(n+1) + diphosphate. DNA-dependent RNA polymerase catalyzes the transcription of DNA into RNA using the four ribonucleoside triphosphates as substrates. The polypeptide is DNA-directed RNA polymerase subunit beta' (Streptococcus pyogenes serotype M12 (strain MGAS2096)).